The sequence spans 351 residues: Phospho-N-acetylmuramoyl-pentapeptide-transferase (351 aa).

10 helical membrane-spanning segments follow: residues 17–37 (TAYA…FIIL), 63–83 (IPTM…FFWI), 85–105 (LWNV…CLGF), 135–155 (ISVT…YFPF), 158–178 (SLKL…LISA), 190–210 (GLAI…AYLT), 230–250 (LVIF…FNAY), 254–274 (IMMG…TALI), 279–299 (ILFA…IIQV), and 328–348 (QVVI…LSTL).

This sequence belongs to the glycosyltransferase 4 family. MraY subfamily. Requires Mg(2+) as cofactor.

The protein resides in the cell inner membrane. It carries out the reaction UDP-N-acetyl-alpha-D-muramoyl-L-alanyl-gamma-D-glutamyl-meso-2,6-diaminopimeloyl-D-alanyl-D-alanine + di-trans,octa-cis-undecaprenyl phosphate = di-trans,octa-cis-undecaprenyl diphospho-N-acetyl-alpha-D-muramoyl-L-alanyl-D-glutamyl-meso-2,6-diaminopimeloyl-D-alanyl-D-alanine + UMP. It participates in cell wall biogenesis; peptidoglycan biosynthesis. In terms of biological role, catalyzes the initial step of the lipid cycle reactions in the biosynthesis of the cell wall peptidoglycan: transfers peptidoglycan precursor phospho-MurNAc-pentapeptide from UDP-MurNAc-pentapeptide onto the lipid carrier undecaprenyl phosphate, yielding undecaprenyl-pyrophosphoryl-MurNAc-pentapeptide, known as lipid I. This chain is Phospho-N-acetylmuramoyl-pentapeptide-transferase, found in Borrelia hermsii (strain HS1 / DAH).